The primary structure comprises 148 residues: Snaclec 7 (148 aa).

A signal peptide spans 1-23 (MGRFIFVSFGLLVVFLSLSGTGA). 3 cysteine pairs are disulfide-bonded: Cys27-Cys38, Cys55-Cys144, and Cys121-Cys136. In terms of domain architecture, C-type lectin spans 34 to 145 (HERHCYKVIN…CSSTHPFVCK (112 aa)).

The protein belongs to the snaclec family. In terms of assembly, heterodimer; disulfide-linked. In terms of tissue distribution, expressed by the venom gland.

The protein resides in the secreted. Its function is as follows. Interferes with one step of hemostasis (modulation of platelet aggregation, or coagulation cascade, for example). The polypeptide is Snaclec 7 (Echis pyramidum leakeyi (Leakey's carpet viper)).